The primary structure comprises 68 residues: SSCPGKSSWPHLVGVGGSVAKAIIERQNPNVKAVILEEGTPVTKDFRCNRVRIWVNKRGLVVSPPRIG.

Position 1 is an N-acetylserine (Ser-1). Cys-3 and Cys-48 form a disulfide bridge.

Belongs to the protease inhibitor I13 (potato type I serine protease inhibitor) family.

Specifically inhibits both trypsin and activated Hageman factor. The sequence is that of Inhibitor of trypsin and hageman factor from Cucurbita maxima (Pumpkin).